A 1101-amino-acid polypeptide reads, in one-letter code: Isoleucine--tRNA ligase (1101 aa).

Positions 50–60 match the 'HIGH' region motif; it reads PFANGLPHYGH. Positions 629-633 match the 'KMSKS' region motif; that stretch reads KLSKR. ATP is bound at residue Lys632.

This sequence belongs to the class-I aminoacyl-tRNA synthetase family. IleS type 2 subfamily. Monomer. It depends on Zn(2+) as a cofactor.

The protein resides in the cytoplasm. The catalysed reaction is tRNA(Ile) + L-isoleucine + ATP = L-isoleucyl-tRNA(Ile) + AMP + diphosphate. Catalyzes the attachment of isoleucine to tRNA(Ile). As IleRS can inadvertently accommodate and process structurally similar amino acids such as valine, to avoid such errors it has two additional distinct tRNA(Ile)-dependent editing activities. One activity is designated as 'pretransfer' editing and involves the hydrolysis of activated Val-AMP. The other activity is designated 'posttransfer' editing and involves deacylation of mischarged Val-tRNA(Ile). The sequence is that of Isoleucine--tRNA ligase from Anaplasma marginale (strain St. Maries).